Here is a 344-residue protein sequence, read N- to C-terminus: MTPLTLALDVMGGDFGPAVTVPAALQALNSDPHLHLLLVGDPDAITPLLARADFEQRSRLQIIAAESVIASDVRPSQAVRNSRGSSMRIALELVKEGRAQACISAGNTGALMGLAKLLLKPVDGIERPALVTVLPHQQKGKTVVLDLGANVDCDSTMLAQFAIMGSVMAEEALGIENPRVALLNIGEEETKGLDSIRDAAALLKTVPSLNYIGYLEANELLTGKTDVLVCDGFVGNVTLKTMEGVVRMFLSLLKSQGEGKKRSWWWLLLKRWLQKSLSRRFSHLNPDQYNGACLLGLRGTVIKSHGAANQRAFAVAIEQAVQAVQRQVPQRIAARLESVLPKSD.

It belongs to the PlsX family. In terms of assembly, homodimer. Probably interacts with PlsY.

Its subcellular location is the cytoplasm. It carries out the reaction a fatty acyl-[ACP] + phosphate = an acyl phosphate + holo-[ACP]. It participates in lipid metabolism; phospholipid metabolism. In terms of biological role, catalyzes the reversible formation of acyl-phosphate (acyl-PO(4)) from acyl-[acyl-carrier-protein] (acyl-ACP). This enzyme utilizes acyl-ACP as fatty acyl donor, but not acyl-CoA. The protein is Phosphate acyltransferase of Cronobacter sakazakii (strain ATCC BAA-894) (Enterobacter sakazakii).